Consider the following 141-residue polypeptide: MAKNVVNVVKLQIPAGKATPAPPVGPALGQAGINIMGFTKEFNARTADQAGMIIPVVISVYEDRSFDFVTKTPPAAVLLKKAAGVEKGSGEPNMKKVATVTKDQVKEIAETKMQDLNAADVEAAMRMIEGTARSMGFVVED.

Belongs to the universal ribosomal protein uL11 family. Part of the ribosomal stalk of the 50S ribosomal subunit. Interacts with L10 and the large rRNA to form the base of the stalk. L10 forms an elongated spine to which L12 dimers bind in a sequential fashion forming a multimeric L10(L12)X complex. Post-translationally, one or more lysine residues are methylated.

Its function is as follows. Forms part of the ribosomal stalk which helps the ribosome interact with GTP-bound translation factors. This chain is Large ribosomal subunit protein uL11, found in Ligilactobacillus salivarius (strain UCC118) (Lactobacillus salivarius).